The primary structure comprises 98 residues: NADH-ubiquinone oxidoreductase chain 4L (98 aa).

3 helical membrane passes run 1–21, 29–49, and 61–81; these read MSMV…GMLV, SLLC…VTIL, and IVLL…LVMV.

It belongs to the complex I subunit 4L family. In terms of assembly, core subunit of respiratory chain NADH dehydrogenase (Complex I) which is composed of 45 different subunits.

It localises to the mitochondrion inner membrane. It carries out the reaction a ubiquinone + NADH + 5 H(+)(in) = a ubiquinol + NAD(+) + 4 H(+)(out). In terms of biological role, core subunit of the mitochondrial membrane respiratory chain NADH dehydrogenase (Complex I) which catalyzes electron transfer from NADH through the respiratory chain, using ubiquinone as an electron acceptor. Part of the enzyme membrane arm which is embedded in the lipid bilayer and involved in proton translocation. The protein is NADH-ubiquinone oxidoreductase chain 4L (MT-ND4L) of Vulpes vulpes (Red fox).